Reading from the N-terminus, the 267-residue chain is Thiamine thiazole synthase (267 aa).

Residues Ser41, 60–61, Gly68, Val132, and 160–162 each bind NAD(+); these read ER and HVD. Positions 162 and 177 each coordinate Fe cation. Met227 provides a ligand contact to NAD(+). Position 237 (Arg237) interacts with glycine.

It belongs to the THI4 family. Homooctamer; tetramer of dimers. It depends on Fe(2+) as a cofactor.

The enzyme catalyses hydrogen sulfide + glycine + NAD(+) = ADP-5-ethyl-4-methylthiazole-2-carboxylate + nicotinamide + 3 H2O + H(+). The protein operates within cofactor biosynthesis; thiamine diphosphate biosynthesis. Involved in the biosynthesis of the thiazole moiety of thiamine. Catalyzes the conversion of NAD and glycine to adenosine diphosphate 5-(2-hydroxyethyl)-4-methylthiazole-2-carboxylate (ADT), an adenylated thiazole intermediate, using free sulfide as a source of sulfur. The polypeptide is Thiamine thiazole synthase (Saccharolobus islandicus (strain L.S.2.15 / Lassen #1) (Sulfolobus islandicus)).